The following is a 375-amino-acid chain: Flagellin (375 aa).

It belongs to the bacterial flagellin family.

Its subcellular location is the secreted. The protein localises to the bacterial flagellum. Functionally, flagellin is the subunit protein which polymerizes to form the filaments of bacterial flagella. Flagella are an important component in the invasiveness of B.bacilliformis. In Bartonella bacilliformis, this protein is Flagellin.